The sequence spans 352 residues: Ketol-acid reductoisomerase (NAD(+)) (352 aa).

In terms of domain architecture, KARI N-terminal Rossmann spans 11–199 (ENVVTSEEFT…AIGSGYLFPT (189 aa)). NAD(+)-binding positions include 38-41 (YGVQ) and 100-103 (DAGQ). The active site involves histidine 124. Glycine 153 is a binding site for NAD(+). The 148-residue stretch at 200–347 (TFEKEVFSDL…AAVRALRPEN (148 aa)) folds into the KARI C-terminal knotted domain. Residues aspartate 208, glutamate 212, glutamate 244, and glutamate 248 each contribute to the Mg(2+) site. Position 270 (serine 270) interacts with substrate.

This sequence belongs to the ketol-acid reductoisomerase family. The cofactor is Mg(2+).

The catalysed reaction is (2R)-2,3-dihydroxy-3-methylbutanoate + NAD(+) = (2S)-2-acetolactate + NADH + H(+). Its pathway is amino-acid biosynthesis; L-isoleucine biosynthesis; L-isoleucine from 2-oxobutanoate: step 2/4. The protein operates within amino-acid biosynthesis; L-valine biosynthesis; L-valine from pyruvate: step 2/4. Functionally, involved in the biosynthesis of branched-chain amino acids (BCAA). Catalyzes an alkyl-migration followed by a ketol-acid reduction of (S)-2-acetolactate (S2AL) to yield (R)-2,3-dihydroxy-isovalerate. In the isomerase reaction, S2AL is rearranged via a Mg-dependent methyl migration to produce 3-hydroxy-3-methyl-2-ketobutyrate (HMKB). In the reductase reaction, this 2-ketoacid undergoes a metal-dependent reduction by NADH to yield (R)-2,3-dihydroxy-isovalerate. In Desulfosudis oleivorans (strain DSM 6200 / JCM 39069 / Hxd3) (Desulfococcus oleovorans), this protein is Ketol-acid reductoisomerase (NAD(+)).